A 295-amino-acid polypeptide reads, in one-letter code: Bifunctional protein FolD (295 aa).

Residues 169-171 (GRG), threonine 196, and valine 237 contribute to the NADP(+) site.

This sequence belongs to the tetrahydrofolate dehydrogenase/cyclohydrolase family. In terms of assembly, homodimer.

The enzyme catalyses (6R)-5,10-methylene-5,6,7,8-tetrahydrofolate + NADP(+) = (6R)-5,10-methenyltetrahydrofolate + NADPH. It catalyses the reaction (6R)-5,10-methenyltetrahydrofolate + H2O = (6R)-10-formyltetrahydrofolate + H(+). It participates in one-carbon metabolism; tetrahydrofolate interconversion. Catalyzes the oxidation of 5,10-methylenetetrahydrofolate to 5,10-methenyltetrahydrofolate and then the hydrolysis of 5,10-methenyltetrahydrofolate to 10-formyltetrahydrofolate. The chain is Bifunctional protein FolD from Kineococcus radiotolerans (strain ATCC BAA-149 / DSM 14245 / SRS30216).